We begin with the raw amino-acid sequence, 1038 residues long: Kinesin-like protein KIN-5B (1038 aa).

A disordered region spans residues 1 to 63 (MAQTPNPSRR…GGGGGGGSEM (63 aa)). The segment covering 24-34 (RPERRQLELRW) has biased composition (basic and acidic residues). Over residues 49 to 61 (GLTGGGGGGGGGS) the composition is skewed to gly residues. The 342-residue stretch at 69–410 (NVQVVLRCRP…LDYAYRAKSI (342 aa)) folds into the Kinesin motor domain. 154 to 161 (GQTGTGKT) is an ATP binding site. Positions 453–502 (QERFALEEAEKKTMRDKIEYLETQNKELKMNIESCKKEYLDLEEAHSRAN) form a coiled coil. A disordered region spans residues 1013 to 1038 (DKGKRYVDQGTRTPRSPLMPVNHYNK).

It belongs to the TRAFAC class myosin-kinesin ATPase superfamily. Kinesin family. KIN-5/BimC subfamily.

The protein resides in the cytoplasm. It localises to the cytoskeleton. It is found in the spindle. Its function is as follows. Responsible for microtubule translocation. May be important for the organization of phragmoplast-specific arrays of microtubules. Plays an essential role in stabilizing the mitotic spindle. Required during mitotic cytokinesis. In Oryza sativa subsp. japonica (Rice), this protein is Kinesin-like protein KIN-5B.